A 301-amino-acid chain; its full sequence is Probable tRNA pseudouridine synthase B (301 aa).

Asp54 serves as the catalytic Nucleophile. The 75-residue stretch at 227-301 (LPRLTIADSA…VVVALERVLV (75 aa)) folds into the PUA domain.

The protein belongs to the pseudouridine synthase TruB family. Type 2 subfamily.

It carries out the reaction uridine(55) in tRNA = pseudouridine(55) in tRNA. In terms of biological role, could be responsible for synthesis of pseudouridine from uracil-55 in the psi GC loop of transfer RNAs. The polypeptide is Probable tRNA pseudouridine synthase B (Halobacterium salinarum (strain ATCC 29341 / DSM 671 / R1)).